Consider the following 398-residue polypeptide: Bifunctional enzyme IspD/IspF (398 aa).

Residues 1–234 (MPNPPRTAAI…SRLTALLGDI (234 aa)) are 2-C-methyl-D-erythritol 4-phosphate cytidylyltransferase. The 2-C-methyl-D-erythritol 2,4-cyclodiphosphate synthase stretch occupies residues 235–398 (RTGTGYDVHA…LPWGAEGLAG (164 aa)). A divalent metal cation is bound by residues D241 and H243. 4-CDP-2-C-methyl-D-erythritol 2-phosphate contacts are provided by residues 241 to 243 (DVH) and 267 to 268 (HS). H275 lines the a divalent metal cation pocket. 4-CDP-2-C-methyl-D-erythritol 2-phosphate contacts are provided by residues 289–291 (DIG), 365–368 (TTSE), F372, and R375.

In the N-terminal section; belongs to the IspD/TarI cytidylyltransferase family. IspD subfamily. It in the C-terminal section; belongs to the IspF family. The cofactor is a divalent metal cation.

The catalysed reaction is 2-C-methyl-D-erythritol 4-phosphate + CTP + H(+) = 4-CDP-2-C-methyl-D-erythritol + diphosphate. It carries out the reaction 4-CDP-2-C-methyl-D-erythritol 2-phosphate = 2-C-methyl-D-erythritol 2,4-cyclic diphosphate + CMP. Its pathway is isoprenoid biosynthesis; isopentenyl diphosphate biosynthesis via DXP pathway; isopentenyl diphosphate from 1-deoxy-D-xylulose 5-phosphate: step 2/6. The protein operates within isoprenoid biosynthesis; isopentenyl diphosphate biosynthesis via DXP pathway; isopentenyl diphosphate from 1-deoxy-D-xylulose 5-phosphate: step 4/6. In terms of biological role, bifunctional enzyme that catalyzes the formation of 4-diphosphocytidyl-2-C-methyl-D-erythritol from CTP and 2-C-methyl-D-erythritol 4-phosphate (MEP) (IspD), and catalyzes the conversion of 4-diphosphocytidyl-2-C-methyl-D-erythritol 2-phosphate (CDP-ME2P) to 2-C-methyl-D-erythritol 2,4-cyclodiphosphate (ME-CPP) with a corresponding release of cytidine 5-monophosphate (CMP) (IspF). This chain is Bifunctional enzyme IspD/IspF, found in Rhodopseudomonas palustris (strain BisB5).